The sequence spans 269 residues: Zinc transporter ZupT (269 aa).

8 consecutive transmembrane segments (helical) span residues 11-31 (IALA…LLVL), 40-60 (LLAF…LSEI), 80-100 (YGTL…HFIP), 125-145 (ALLT…ATFF), 158-178 (AFAI…PVYF), 187-207 (FSAS…GYWL), 217-237 (FGWV…DELL), and 249-269 (TVYG…LFKW). Residues asparagine 136 and glutamate 139 each coordinate Fe(2+). Zn(2+) is bound by residues glutamate 139 and histidine 164. Fe(2+) contacts are provided by asparagine 165, glutamate 168, and glutamate 197. Zn(2+) is bound at residue glutamate 168.

The protein belongs to the ZIP transporter (TC 2.A.5) family. ZupT subfamily.

The protein localises to the cell inner membrane. It catalyses the reaction Zn(2+)(in) = Zn(2+)(out). In terms of biological role, mediates zinc uptake. May also transport other divalent cations. The polypeptide is Zinc transporter ZupT (Stenotrophomonas maltophilia (strain K279a)).